Here is a 736-residue protein sequence, read N- to C-terminus: Exo-oligoalginate lyase (736 aa).

Residues 1–23 (MLSVNTIKNTLLAAVLVSVPATA) form the signal peptide. Substrate is bound by residues Lys136, 146–149 (QSLN), Lys198, His202, and 257–260 (YYQR). The active-site Proton donor is Tyr258. Residue His413 is the Proton acceptor of the active site. 2 residues coordinate Zn(2+): His415 and Asp433. Arg438 contributes to the substrate binding site. His464 contributes to the Zn(2+) binding site. Residue Glu667 coordinates substrate.

It belongs to the polysaccharide lyase 17 family. As to quaternary structure, homodimer. The cofactor is Zn(2+).

Its subcellular location is the periplasm. It catalyses the reaction Cleavage of 4-deoxy-alpha-L-erythro-hex-4-enopyranuronoside oligosaccharides into 4-deoxy-alpha-L-erythro-hex-4-enopyranuronate monosaccharides.. Functionally, catalyzes the depolymerization of alginate through an exolytic mode of action, via a beta-elimination mechanism. Preferentially acts on oligoalginates with degrees of polymerization higher than 2 to produce the alginate monomer, 4-deoxy-L-erythro-5-hexoseulose uronic acid. The polypeptide is Exo-oligoalginate lyase (Saccharophagus degradans (strain 2-40 / ATCC 43961 / DSM 17024)).